We begin with the raw amino-acid sequence, 209 residues long: Small ribosomal subunit protein uS4 (209 aa).

The S4 RNA-binding domain occupies 99–164 (GRLDSVVYRM…QLRVKAALEA (66 aa)).

It belongs to the universal ribosomal protein uS4 family. As to quaternary structure, part of the 30S ribosomal subunit. Contacts protein S5. The interaction surface between S4 and S5 is involved in control of translational fidelity.

One of the primary rRNA binding proteins, it binds directly to 16S rRNA where it nucleates assembly of the body of the 30S subunit. Its function is as follows. With S5 and S12 plays an important role in translational accuracy. In Aromatoleum aromaticum (strain DSM 19018 / LMG 30748 / EbN1) (Azoarcus sp. (strain EbN1)), this protein is Small ribosomal subunit protein uS4.